A 134-amino-acid chain; its full sequence is MISGSATASHGRVLLPSQRERRPVSTGSNILRFRETVPRQFSLMMVTKATAKYMGTKMREEKLSEMIEEKVKEATEVCEAEEMSEECRVAWDEVEEVSQARADLRIKLKLLNQDPLESFCQENPETDECRIYED.

Positions 1–21 (MISGSATASHGRVLLPSQRER) are disordered. The N-terminal 42 residues, 1–42 (MISGSATASHGRVLLPSQRERRPVSTGSNILRFRETVPRQFS), are a transit peptide targeting the chloroplast. 2 disulfides stabilise this stretch: C78–C87 and C120–C129.

The protein belongs to the CP12 family. In terms of assembly, monomer. Component of a complex that contains two dimers of PRK, two tetramers of GAPDH and CP12. CP12 associates with GAPDH, causing its conformation to change. This GAPDH/CP12 complex binds PRK to form a half-complex (one unit). This unit probably dimerizes due partially to interactions between the enzymes of each unit. Contains two disulfide bonds; only the oxidized protein, with two disulfide bonds, is active in complex formation. The C-terminal disulfide is involved in the interaction with GAPDH and the N-terminal disulfide mediates the binding of PRK with this binary complex. In terms of tissue distribution, mostly expressed, at low levels, in stems and, to a lesser extent, in leaves and roots.

It is found in the plastid. Its subcellular location is the chloroplast. Its function is as follows. Acts as a linker essential in the assembly of a core complex of PRK/GAPDH. Coordinates the reversible inactivation of chloroplast enzymes GAPDH and PRK during darkness in photosynthetic tissues. This Arabidopsis thaliana (Mouse-ear cress) protein is Calvin cycle protein CP12-3, chloroplastic (CP12-3).